A 385-amino-acid polypeptide reads, in one-letter code: Meiosis-specific protein MEI4 (385 aa).

The interaction with REC114 stretch occupies residues M1 to T126. A disordered region spans residues A86–Q110. Residues S92–S107 show a composition bias toward polar residues.

The protein belongs to the MEI4L family. In terms of assembly, part of the MCD recombinosome complex, at least composed of IHO1, REC114 and MEI4. Forms a complex with REC114; the interaction is required for MEI4 stability. Interacts (via N-terminal domain) with REC114 (via C-terminal domain). Interacts with IHO1.

The protein resides in the chromosome. Functionally, required for DNA double-strand breaks (DSBs) formation in unsynapsed regions during meiotic recombination. Probably acts by forming a complex with IHO1 and REC114, which activates DSBs formation in unsynapsed regions, an essential step to ensure completion of synapsis. This Homo sapiens (Human) protein is Meiosis-specific protein MEI4.